A 205-amino-acid chain; its full sequence is MSKRESSKYKIDRRMGENIWGRPKSPVNRREYGPGQHGQRRKGKLSDFGVQLRAKQKLKGYYGDLREKQFRAIFAEADRRKGDTSENLIGLLESRLDAIVYRAKFVPTVFAARQFVNHGHVTVNGVRVNIGSYRCKAGDVIEVREKSKQLVIVLEAVSLAERDVPDYIEVDHNKMVATFGRVPTLSDVPFPVVMEPHLVVEFYSR.

Residues 1–16 (MSKRESSKYKIDRRMG) are compositionally biased toward basic and acidic residues. Residues 1–46 (MSKRESSKYKIDRRMGENIWGRPKSPVNRREYGPGQHGQRRKGKLS) form a disordered region. An S4 RNA-binding domain is found at 94 to 157 (SRLDAIVYRA…KQLVIVLEAV (64 aa)).

It belongs to the universal ribosomal protein uS4 family. Part of the 30S ribosomal subunit. Contacts protein S5. The interaction surface between S4 and S5 is involved in control of translational fidelity.

Functionally, one of the primary rRNA binding proteins, it binds directly to 16S rRNA where it nucleates assembly of the body of the 30S subunit. Its function is as follows. With S5 and S12 plays an important role in translational accuracy. This is Small ribosomal subunit protein uS4 from Rhizobium leguminosarum bv. trifolii (strain WSM2304).